The sequence spans 1039 residues: uncharacterized protein (1039 aa).

The signal sequence occupies residues 1 to 28 (MKLFPRTLLKILVVSFILNFGVTSKSYA). A run of 6 helical transmembrane segments spans residues 326–346 (IVTAFLTLYVMLFGAKILLAG), 354–374 (YINFILKIIFVTYFSIGLNIT), 387–407 (MIQWAFPFLLNGINGLASWVM), 491–511 (MLVSLALAYPLLVISVAAFMV), 517–537 (CMVSIVILGILAPLFVPMFLF), and 551–571 (MISFLLQPMVVVTFMITMFSV). The interval 654–680 (KPNQTCDPKAADADTKCNPKPGDSSTS) is disordered. Residues 710 to 730 (IKDILLALVTACFTLYLMYNF) form a helical membrane-spanning segment. 3 disordered regions span residues 799 to 875 (LVKG…PTTV), 917 to 949 (IKEAVPESQKEEPKEPRVKHTTEVEPELNLDEN), and 1004 to 1039 (LYRSVGGRAKDKATERNDGTIENRSKKIDSGSDENP). The segment covering 802 to 811 (GSGGGGGSEG) has biased composition (gly residues). The segment covering 812-836 (GDSFTSGGLRETSSTAATPSSALSS) has biased composition (low complexity). The segment covering 843 to 861 (GTATPSSASEEMLDTSFSN) has biased composition (polar residues). Basic and acidic residues-rich tracts occupy residues 917 to 939 (IKEAVPESQKEEPKEPRVKHTTE) and 1004 to 1033 (LYRSVGGRAKDKATERNDGTIENRSKKIDS).

The protein belongs to the TrbL/VirB6 family.

It is found in the cell membrane. This is an uncharacterized protein from Rickettsia bellii (strain RML369-C).